Here is a 2542-residue protein sequence, read N- to C-terminus: Ankyrin repeat and KH domain-containing protein 1 (2542 aa).

Methionine 1 carries the N-acetylmethionine modification. A compositionally biased stretch (gly residues) spans methionine 1–threonine 10. Disordered stretches follow at residues methionine 1–valine 44 and alanine 50–glycine 69. Residues alanine 20–serine 29 show a composition bias toward low complexity. Over residues glycine 57–glycine 69 the composition is skewed to gly residues. A phosphoserine mark is found at serine 101 and serine 105. 15 ANK repeats span residues valine 204 to glutamate 233, glutamate 237 to aspartate 266, glycine 271 to serine 300, threonine 304 to aspartate 333, asparagine 337 to threonine 366, phenylalanine 371 to histidine 400, glutamate 404 to methionine 433, serine 437 to glutamate 466, glutamate 470 to alanine 499, threonine 504 to leucine 533, glycine 534 to alanine 563, threonine 567 to histidine 596, glycine 600 to arginine 629, asparagine 634 to histidine 663, and aspartate 667 to serine 696. Positions leucine 775–glutamine 852 form a coiled coil. Serine 803 carries the post-translational modification Phosphoserine. 10 ANK repeats span residues asparagine 1054–histidine 1083, lysine 1087–alanine 1116, threonine 1121–histidine 1150, serine 1154–serine 1183, leucine 1189–alanine 1218, asparagine 1223–histidine 1252, threonine 1256–alanine 1285, serine 1291–valine 1320, lysine 1324–alanine 1353, and arginine 1357–serine 1386. Positions lysine 1415–leucine 1485 form a coiled coil. 3 disordered regions span residues arginine 1441 to isoleucine 1517, asparagine 1534 to leucine 1614, and serine 1632 to valine 1664. The span at arginine 1453 to lysine 1463 shows a compositional bias: basic residues. The span at lysine 1464–serine 1483 shows a compositional bias: basic and acidic residues. The segment covering glutamate 1484 to valine 1502 has biased composition (acidic residues). Residues proline 1503–isoleucine 1517 are compositionally biased toward low complexity. Position 1540 is a phosphoserine (serine 1540). Threonine 1553 bears the Phosphothreonine mark. A compositionally biased stretch (low complexity) spans asparagine 1590–serine 1603. Positions glutamate 1604–leucine 1614 are enriched in polar residues. Residue serine 1632 is modified to Phosphoserine. The segment covering serine 1638 to valine 1664 has biased composition (polar residues). Phosphothreonine is present on threonine 1653. The KH domain maps to arginine 1695 to isoleucine 1759. Disordered regions lie at residues asparagine 1886 to serine 1923, proline 1987 to threonine 2106, and asparagine 2260 to proline 2367. Over residues proline 1898–proline 1922 the composition is skewed to polar residues. A compositionally biased stretch (low complexity) spans proline 1987–serine 1996. The span at glycine 1997–glutamate 2019 shows a compositional bias: polar residues. Residues cysteine 2042–threonine 2077 are compositionally biased toward low complexity. Over residues glutamine 2078–threonine 2106 the composition is skewed to polar residues. Composition is skewed to low complexity over residues leucine 2285 to isoleucine 2308 and threonine 2337 to threonine 2349.

The protein belongs to the mask family. In terms of assembly, interacts with PTPN11. Isoform 2 interacts with HIV-1 VPR. Interacts with NOD2. Ubiquitous with high expression in cervix, spleen and brain. Expressed in hematopoietic cells with increased expression in leukemia cells. Isoform 2 is highly expressed in spleen with almost no expression in muscle and brain.

The protein resides in the cytoplasm. Functionally, may play a role as a scaffolding protein that may be associated with the abnormal phenotype of leukemia cells. Isoform 2 may possess an antiapoptotic effect and protect cells during normal cell survival through its regulation of caspases. This is Ankyrin repeat and KH domain-containing protein 1 (ANKHD1) from Homo sapiens (Human).